Consider the following 319-residue polypeptide: MVKSKLGVLLVNLGTPDAPTVPAIKRYLKQFLSDRRVIDTPPILWWPLLRGIVLPFRSRRVAKLYQSIWMPEGSPLLVYSDRQQKALAARLPDASVELAMSYGSPSLGDAINRLITQGIIKLVILPLYPQYSATTCGSVWDAVSGILKKYRSLPSIYFIRDYAQHPSYINALKQSVARYFEKHGQPDKLLLSFHGIPQRYVRLGDDYPKRCEDTYRALSTALGLHNNKIMMTYQSRFGWEPWLTPYTDKTLKSLPAKGIKHIQVLCPGFSADCLETLEEIKEQNKEIFLKAGGKKFEYIPALNDSPEQIDLLEQLVSLG.

Fe cation contacts are provided by histidine 194 and glutamate 275.

Belongs to the ferrochelatase family.

It localises to the cytoplasm. The catalysed reaction is heme b + 2 H(+) = protoporphyrin IX + Fe(2+). The protein operates within porphyrin-containing compound metabolism; protoheme biosynthesis; protoheme from protoporphyrin-IX: step 1/1. Catalyzes the ferrous insertion into protoporphyrin IX. This is Ferrochelatase from Hamiltonella defensa subsp. Acyrthosiphon pisum (strain 5AT).